The following is a 325-amino-acid chain: Methionyl-tRNA formyltransferase (325 aa).

113–116 (SLLP) provides a ligand contact to (6S)-5,6,7,8-tetrahydrofolate.

This sequence belongs to the Fmt family.

The catalysed reaction is L-methionyl-tRNA(fMet) + (6R)-10-formyltetrahydrofolate = N-formyl-L-methionyl-tRNA(fMet) + (6S)-5,6,7,8-tetrahydrofolate + H(+). Its function is as follows. Attaches a formyl group to the free amino group of methionyl-tRNA(fMet). The formyl group appears to play a dual role in the initiator identity of N-formylmethionyl-tRNA by promoting its recognition by IF2 and preventing the misappropriation of this tRNA by the elongation apparatus. This is Methionyl-tRNA formyltransferase from Chromohalobacter salexigens (strain ATCC BAA-138 / DSM 3043 / CIP 106854 / NCIMB 13768 / 1H11).